The sequence spans 2139 residues: MADVTARSLQYEYKANSNLVLQADRSLIDRTRRDEPTGEVLSLVGKLEGTRMGDKAQRTKPQMQEERRAKRRKRDEDRHDINKMKGYTLLSEGIDEMVGIIYKPKTKETRETYEVLLSFIQAALGDQPRDILCGAADEVLAVLKNEKLRDKERRREIDLLLGQTDDTRYHVLVNLGKKITDYGGDKEIQNMDDNIDETYGVNVQFESDEEEGDEDVYGEVREEASDDDMEGDEAVVRCTLSANLVASGELMSSKKKDLHPRDIDAFWLQRQLSRFYDDAIVSQKKADEVLEILKTASDDRECENQLVLLLGFNTFDFIKVLRQHRMMILYCTLLASAQSEAEKERIMGKMEADPELSKFLYQLHETEKEDLIREERSRRERVRQSRMDTDLETMDLDQGGEALAPRQVLDLEDLVFTQGSHFMANKRCQLPDGSFRRQRKGYEEVHVPALKPKPFGSEEQLLPVEKLPKYAQAGFEGFKTLNRIQSKLYRAALETDENLLLCAPTGAGKTNVALMCMLREIGKHINMDGTINVDDFKIIYIAPMRSLVQEMVGSFGKRLATYGITVAELTGDHQLCKEEISATQIIVCTPEKWDIITRKGGERTYTQLVRLIVLDEIHLLHDDRGPVLEALVARAIRNIEMTQEDVRLIGLSATLPNYEDVATFLRVDPAKGLFYFDNSFRPVPLEQTYVGITEKKAIKRFQIMNEIVYEKIMEHAGKNQVLVFVHSRKETGKTARAIRDMCLEKDTLGLFLREGSASTEVLRTEAEQCKNLELKDLLPYGFAIHHAGMTRVDRTLVEDLFADKHIQVLVSTATLAWGVNLPAHTVIIKGTQVYSPEKGRWTELGALDILQMLGRAGRPQYDTKGEGILITSHGELQYYLSLLNQQLPIESQMVSKLPDMLNAEIVLGNVQNAKDAVNWLGYAYLYIRMLRSPTLYGISHDDLKGDPLLDQRRLDLVHTAALMLDKNNLVKYDKKTGNFQVTELGRIASHYYITNDTVQTYNQLLKPTLSEIELFRVFSLSSEFKNITVREEEKLELQKLLERVPIPVKESIEEPSAKINVLLQAFISQLKLEGFALMADMVYVTQSAGRLMRAIFEIVLNRGWAQLTDKTLNLCKMIDKRMWQSMCPLRQFRKLPEEVVKKIEKKNFPFERLYDLNHNEIGELIRMPKMGKTIHKYVHLFPKLELSVHLQPITRSTLKVELTITPDFQWDEKARLVHGSSEAFWILVEDVDSEVILHHEYFLLKAKYAQDEHLITFFVPVFEPLPPQYFIRVVSDRWLSCETQLPVSFRHLILPEKYPPPTELLDLQPLPVSALRNSAFESLYQDKFPFFNPIQTQVFNTVYNSDDNVFVGAPTGSGKTICAEFAILRMLLQNSEGRCVYITPMEALAEQVYMDWYEKFQDRLNKKVVLLTGETSTDLKLLGKGNIIISTPEKWDILSRRWKQRKNVQNINLFVVDEVHLIGGENGPVLEVICSRMRYISSQIERPIRIVALSSSLSNAKDVAHWLGCSATSTFNFHPNVRPVPLELHIQGFNISHTQTRLLSMAKPVYHAITKHSPKKPVIVFVPSRKQTRLTAIDILTTCAADIQRQRFLHCTEKDLIPYLEKLSDSTLKETLLNGVGYLHEGLSPMERRLVEQLFSSGAIQVVVASRSLCWGMNVAAHLVIIMDTQYYNGKIHAYVDYPIYDVLQMVGHANRPLQDDEGRCVIMCQGSKKDFFKKFLYEPLPVESHLDHCMHDHFNAEIVTKTIENKQDAVDYLTWTFLYRRMTQNPNYYNLQGISHRHLSDHLSELVEQTLSDLEQSKCISIEDEMDVAPLNLGMIAAYYYINYTTIELFSMSLNAKTKVRGLIEIISNAAEYENIPIRHHEDNLLRQLAQKVPHKLNNPKFNDPHVKTNLLLQAHLSRMQLSAELQSDTEEILSKAIRLIQACVDVLSSNGWLSPALAAMELAQMVTQAMWSKDSYLKQLPHFTSEHIKRCTDKGVESVFDIMEMEDEERNALLQLTDSQIADVARFCNRYPNIELSYEVVDKDSIRSGGPVVVLVQLEREEEVTGPVIAPLFPQKREEGWWVVIGDAKSNSLISIKRLTLQQKAKVKLDFVAPATGGHNYTLYFMSDAYMGCDQEYKFSVDVKEAETDSDSD.

Ser-17 and Ser-26 each carry phosphoserine. The interval 39–80 (EVLSLVGKLEGTRMGDKAQRTKPQMQEERRAKRRKRDEDRHD) is disordered. Lys-46 participates in a covalent cross-link: Glycyl lysine isopeptide (Lys-Gly) (interchain with G-Cter in SUMO2). The span at 48 to 80 (EGTRMGDKAQRTKPQMQEERRAKRRKRDEDRHD) shows a compositional bias: basic and acidic residues. The stretch at 54–84 (DKAQRTKPQMQEERRAKRRKRDEDRHDINKM) forms a coiled coil. At Ser-225 the chain carries Phosphoserine. Thr-389 carries the post-translational modification Phosphothreonine. Residues 395-2132 (DLDQGGEALA…YKFSVDVKEA (1738 aa)) are interaction with C9orf78 and WBP4. The Helicase ATP-binding 1 domain maps to 490–673 (RAALETDENL…FLRVDPAKGL (184 aa)). 503 to 510 (APTGAGKT) provides a ligand contact to ATP. The DEAH box signature appears at 615–618 (DEIH). Residues 684-921 (PLEQTYVGIT…NAKDAVNWLG (238 aa)) form the Helicase C-terminal 1 domain. Tyr-709 carries the post-translational modification Phosphotyrosine. Lys-944 participates in a covalent cross-link: Glycyl lysine isopeptide (Lys-Gly) (interchain with G-Cter in SUMO). Lys-971 is subject to N6-acetyllysine; alternate. Lys-971 participates in a covalent cross-link: Glycyl lysine isopeptide (Lys-Gly) (interchain with G-Cter in SUMO); alternate. Residues 982-1289 (TELGRIASHY…SCETQLPVSF (308 aa)) form the SEC63 1 domain. Glycyl lysine isopeptide (Lys-Gly) (interchain with G-Cter in SUMO) cross-links involve residues Lys-1071 and Lys-1199. Positions 1285 to 2139 (LPVSFRHLIL…KEAETDSDSD (855 aa)) are interaction with TSSC4. Residues 1340 to 1515 (NTVYNSDDNV…WLGCSATSTF (176 aa)) form the Helicase ATP-binding 2 domain. Residue 1353 to 1360 (APTGSGKT) participates in ATP binding. At Thr-1431 the chain carries Phosphothreonine. Positions 1457–1460 (DEVH) match the DEAH box motif. The 209-residue stretch at 1548 to 1756 (PVYHAITKHS…TIENKQDAVD (209 aa)) folds into the Helicase C-terminal 2 domain. Phosphothreonine is present on Thr-1768. Residues 1815 to 2127 (PLNLGMIAAY…GCDQEYKFSV (313 aa)) form the SEC63 2 domain. The residue at position 2005 (Ser-2005) is a Phosphoserine. Lys-2094 participates in a covalent cross-link: Glycyl lysine isopeptide (Lys-Gly) (interchain with G-Cter in SUMO). Position 2134 is a phosphothreonine (Thr-2134). A phosphoserine mark is found at Ser-2136 and Ser-2138.

It belongs to the helicase family. SKI2 subfamily. In terms of assembly, component of a core complex containing at least PRPF8, SNRNP200, EFTUD2 and SNRNP40. Component of the U5 snRNP and U4/U6-U5 tri-snRNP complexes, building blocks of the spliceosome. Component of the U4/U6-U5 tri-snRNP complex composed of the U4, U6 and U5 snRNAs and at least PRPF3, PRPF4, PRPF6, PRPF8, PRPF31, SNRNP200, TXNL4A, SNRNP40, DDX23, CD2BP2, PPIH, SNU13, EFTUD2, SART1 and USP39. Component of precatalytic, catalytic and postcatalytic spliceosomal complexes. Component of the minor spliceosome, which splices U12-type introns. Interacts with C9orf78; the interaction is direct and mutually exclusive with its interaction with WBP4. Interacts with WBP4; the interaction is mutually exclusive with its interaction with C9orf78. Interacts with PRPF8. Interacts with TSSC4; the interaction is direct, excludes recruitment of C9ORF78 and WBP4 to SNRNP200 and negatively regulates its RNA helicase activity.

The protein resides in the nucleus. It catalyses the reaction ATP + H2O = ADP + phosphate + H(+). In terms of biological role, catalyzes the ATP-dependent unwinding of U4/U6 RNA duplices, an essential step in the assembly of a catalytically active spliceosome. Plays a role in pre-mRNA splicing as core component of precatalytic, catalytic and postcatalytic spliceosomal complexes. As a component of the minor spliceosome, involved in the splicing of U12-type introns in pre-mRNAs. Involved in spliceosome assembly, activation and disassembly. Mediates changes in the dynamic network of RNA-RNA interactions in the spliceosome. In Rattus norvegicus (Rat), this protein is U5 small nuclear ribonucleoprotein 200 kDa helicase (Snrnp200).